A 100-amino-acid chain; its full sequence is Replication restart protein PriB (100 aa).

Residues 1–100 (MTNRMELSGT…VLHADDIIHI (100 aa)) form the SSB domain.

The protein belongs to the PriB family. As to quaternary structure, homodimer. Interacts with PriA and DnaT. Component of the replication restart primosome. Primosome assembly occurs via a 'hand-off' mechanism. PriA binds to replication forks, subsequently PriB then DnaT bind; DnaT then displaces ssDNA to generate the helicase loading substrate.

Involved in the restart of stalled replication forks, which reloads the replicative helicase on sites other than the origin of replication; the PriA-PriB pathway is the major replication restart pathway. During primosome assembly it facilitates complex formation between PriA and DnaT on DNA; stabilizes PriA on DNA. Stimulates the DNA unwinding activity of PriA helicase. The protein is Replication restart protein PriB of Vibrio vulnificus (strain CMCP6).